Reading from the N-terminus, the 86-residue chain is Large ribosomal subunit protein bL27 (86 aa).

Residues 1-21 (MAHKKAAGSSRNGRDSESKRL) form a disordered region.

It belongs to the bacterial ribosomal protein bL27 family.

This is Large ribosomal subunit protein bL27 from Hahella chejuensis (strain KCTC 2396).